A 126-amino-acid polypeptide reads, in one-letter code: Small ribosomal subunit protein uS13 (126 aa).

Residues 91–126 (RHRRGLPVRGQRTSTNARTRKGPRRAIAGKKKPGKK) form a disordered region. Basic residues predominate over residues 108 to 126 (RTRKGPRRAIAGKKKPGKK).

This sequence belongs to the universal ribosomal protein uS13 family. In terms of assembly, part of the 30S ribosomal subunit. Forms a loose heterodimer with protein S19. Forms two bridges to the 50S subunit in the 70S ribosome.

Functionally, located at the top of the head of the 30S subunit, it contacts several helices of the 16S rRNA. In the 70S ribosome it contacts the 23S rRNA (bridge B1a) and protein L5 of the 50S subunit (bridge B1b), connecting the 2 subunits; these bridges are implicated in subunit movement. Contacts the tRNAs in the A and P-sites. The sequence is that of Small ribosomal subunit protein uS13 from Streptomyces coelicolor (strain ATCC BAA-471 / A3(2) / M145).